A 248-amino-acid chain; its full sequence is Probable transcriptional regulatory protein LAR_0538 (248 aa).

Positions methionine 1–glycine 22 are disordered.

This sequence belongs to the TACO1 family.

It is found in the cytoplasm. The chain is Probable transcriptional regulatory protein LAR_0538 from Limosilactobacillus reuteri subsp. reuteri (strain JCM 1112) (Lactobacillus reuteri).